Reading from the N-terminus, the 491-residue chain is Glucose-6-phosphate 1-dehydrogenase (491 aa).

Residues R49, 91 to 92 (DV), and K146 contribute to the NADP(+) site. Substrate-binding residues include H176, K180, E214, and D233. Residue H238 is the Proton acceptor of the active site. Positions 338 and 343 each coordinate substrate.

It belongs to the glucose-6-phosphate dehydrogenase family.

The catalysed reaction is D-glucose 6-phosphate + NADP(+) = 6-phospho-D-glucono-1,5-lactone + NADPH + H(+). It participates in carbohydrate degradation; pentose phosphate pathway; D-ribulose 5-phosphate from D-glucose 6-phosphate (oxidative stage): step 1/3. In terms of biological role, catalyzes the oxidation of glucose 6-phosphate to 6-phosphogluconolactone. The sequence is that of Glucose-6-phosphate 1-dehydrogenase from Buchnera aphidicola subsp. Acyrthosiphon pisum (strain APS) (Acyrthosiphon pisum symbiotic bacterium).